Reading from the N-terminus, the 143-residue chain is Nucleoside diphosphate kinase (143 aa).

Residues K11, F59, R87, T93, R104, and N114 each coordinate ATP. H117 acts as the Pros-phosphohistidine intermediate in catalysis.

Belongs to the NDK family. Homotetramer. Requires Mg(2+) as cofactor.

Its subcellular location is the cytoplasm. The enzyme catalyses a 2'-deoxyribonucleoside 5'-diphosphate + ATP = a 2'-deoxyribonucleoside 5'-triphosphate + ADP. The catalysed reaction is a ribonucleoside 5'-diphosphate + ATP = a ribonucleoside 5'-triphosphate + ADP. Its function is as follows. Major role in the synthesis of nucleoside triphosphates other than ATP. The ATP gamma phosphate is transferred to the NDP beta phosphate via a ping-pong mechanism, using a phosphorylated active-site intermediate. The sequence is that of Nucleoside diphosphate kinase from Salmonella arizonae (strain ATCC BAA-731 / CDC346-86 / RSK2980).